We begin with the raw amino-acid sequence, 384 residues long: Beta-ureidopropionase (384 aa).

The 273-residue stretch at 72–344 (VHVGLVQNRI…DGLLVAKLDL (273 aa)) folds into the CN hydrolase domain. The Proton acceptor role is filled by Glu119. Lys196 (proton donor) is an active-site residue. Residue Cys233 is the Nucleophile of the active site. Phosphoserine is present on Ser378.

Belongs to the carbon-nitrogen hydrolase superfamily. BUP family. In terms of assembly, homodimer, homotetramer, homooctamer; can also form higher homooligomers.

It localises to the cytoplasm. The catalysed reaction is 3-(carbamoylamino)propanoate + H2O + 2 H(+) = beta-alanine + NH4(+) + CO2. It carries out the reaction 3-(carbamoylamino)-2-methylpropanoate + H2O + 2 H(+) = (R)-3-amino-2-methylpropanoate + NH4(+) + CO2. Its pathway is amino-acid biosynthesis; beta-alanine biosynthesis. Functionally, catalyzes a late step in pyrimidine degradation. Converts N-carbamoyl-beta-alanine (3-ureidopropanoate) into beta-alanine, ammonia and carbon dioxide. Likewise, converts N-carbamoyl-beta-aminoisobutyrate (3-ureidoisobutyrate) into beta-aminoisobutyrate, ammonia and carbon dioxide. The sequence is that of Beta-ureidopropionase (UPB1) from Pongo abelii (Sumatran orangutan).